The primary structure comprises 486 residues: Serine/threonine-protein kinase 32C (486 aa).

The segment at Met1 to Arg56 is disordered. Phosphoserine occurs at positions 10, 15, and 18. Positions Ala24–Ser33 are enriched in low complexity. In terms of domain architecture, Protein kinase spans Phe93–Leu353. ATP-binding positions include Ile99–Val107 and Lys122. Asp216 (proton acceptor) is an active-site residue. The segment covering His396–Asn405 has biased composition (basic residues). Disordered stretches follow at residues His396–Asn419 and Ser444–Gly486.

It belongs to the protein kinase superfamily. Ser/Thr protein kinase family. Mg(2+) is required as a cofactor.

It catalyses the reaction L-seryl-[protein] + ATP = O-phospho-L-seryl-[protein] + ADP + H(+). The enzyme catalyses L-threonyl-[protein] + ATP = O-phospho-L-threonyl-[protein] + ADP + H(+). This chain is Serine/threonine-protein kinase 32C, found in Homo sapiens (Human).